Consider the following 591-residue polypeptide: L-fucose isomerase (591 aa).

Active-site proton acceptor residues include Glu-337 and Asp-361. Mn(2+)-binding residues include Glu-337, Asp-361, and His-528.

Belongs to the L-fucose isomerase family. Homohexamer. It depends on Mn(2+) as a cofactor.

It localises to the cytoplasm. It catalyses the reaction L-fucose = L-fuculose. The protein operates within carbohydrate degradation; L-fucose degradation; L-lactaldehyde and glycerone phosphate from L-fucose: step 1/3. Functionally, converts the aldose L-fucose into the corresponding ketose L-fuculose. The protein is L-fucose isomerase of Escherichia coli O6:K15:H31 (strain 536 / UPEC).